A 199-amino-acid polypeptide reads, in one-letter code: Nitrile hydratase subunit alpha (199 aa).

Fe(3+) contacts are provided by cysteine 102, cysteine 105, serine 106, and cysteine 107. Cysteine 105 is subject to Cysteine sulfinic acid (-SO2H). Residue cysteine 107 is modified to Cysteine sulfenic acid (-SOH).

This sequence belongs to the nitrile hydratase subunit alpha family. As to quaternary structure, heterodimer of an alpha and a beta chain. Fe(3+) serves as cofactor. Oxidation on Cys-105 is essential for the activity. In terms of processing, oxidation on Cys-107 stabilizes the Fe-NO ligand coordinated in the inactive form.

It carries out the reaction an aliphatic primary amide = an aliphatic nitrile + H2O. Inactivated by oxidation of Cys-107 to a sulfenic acid. Its function is as follows. NHase catalyzes the hydration of various nitrile compounds to the corresponding amides. Industrial production of acrylamide is now being developed using some of the enzymes of this class. This chain is Nitrile hydratase subunit alpha (nthA), found in Rhodococcus sp.